We begin with the raw amino-acid sequence, 100 residues long: Small ribosomal subunit protein uS14c (100 aa).

Belongs to the universal ribosomal protein uS14 family. As to quaternary structure, part of the 30S ribosomal subunit.

It is found in the plastid. The protein resides in the chloroplast. Binds 16S rRNA, required for the assembly of 30S particles. This Oedogonium cardiacum (Filamentous green alga) protein is Small ribosomal subunit protein uS14c.